The following is a 117-amino-acid chain: Multidrug resistance protein EbrB (117 aa).

Transmembrane regions (helical) follow at residues 3–23 (GLLY…MLKL), 31–51 (WPIG…SFSL), 59–79 (AYAT…FLLF), and 81–101 (ETIS…VVVL).

Belongs to the drug/metabolite transporter (DMT) superfamily. Small multidrug resistance (SMR) (TC 2.A.7.1) family. EbrA/EbrB subfamily. The efflux pump is composed of EbrA and EbrB.

The protein localises to the cell membrane. Its function is as follows. Part of a multidrug efflux pump. Confers resistance to cationic lipophilic dyes such as ethidium bromide, acriflavine, pyronine Y and safranin O. The efflux is probably coupled to an influx of protons. The chain is Multidrug resistance protein EbrB (ebrB) from Bacillus atrophaeus.